Here is a 187-residue protein sequence, read N- to C-terminus: ATP synthase subunit b (187 aa).

A helical transmembrane segment spans residues 32–52 (NILDTNLINLAIIITVLFVFG).

It belongs to the ATPase B chain family. As to quaternary structure, F-type ATPases have 2 components, F(1) - the catalytic core - and F(0) - the membrane proton channel. F(1) has five subunits: alpha(3), beta(3), gamma(1), delta(1), epsilon(1). F(0) has four main subunits: a(1), b(1), b'(1) and c(10-14). The alpha and beta chains form an alternating ring which encloses part of the gamma chain. F(1) is attached to F(0) by a central stalk formed by the gamma and epsilon chains, while a peripheral stalk is formed by the delta, b and b' chains.

It is found in the cellular thylakoid membrane. F(1)F(0) ATP synthase produces ATP from ADP in the presence of a proton or sodium gradient. F-type ATPases consist of two structural domains, F(1) containing the extramembraneous catalytic core and F(0) containing the membrane proton channel, linked together by a central stalk and a peripheral stalk. During catalysis, ATP synthesis in the catalytic domain of F(1) is coupled via a rotary mechanism of the central stalk subunits to proton translocation. In terms of biological role, component of the F(0) channel, it forms part of the peripheral stalk, linking F(1) to F(0). This chain is ATP synthase subunit b, found in Trichormus variabilis (strain ATCC 29413 / PCC 7937) (Anabaena variabilis).